An 81-amino-acid chain; its full sequence is Photosystem I iron-sulfur center (81 aa).

4Fe-4S ferredoxin-type domains are found at residues Ala-2 to Trp-31 and Ile-39 to Tyr-68. [4Fe-4S] cluster is bound by residues Cys-11, Cys-14, Cys-17, Cys-21, Cys-48, Cys-51, Cys-54, and Cys-58.

As to quaternary structure, the eukaryotic PSI reaction center is composed of at least 11 subunits. It depends on [4Fe-4S] cluster as a cofactor.

Its subcellular location is the plastid. The protein resides in the cyanelle thylakoid membrane. The enzyme catalyses reduced [plastocyanin] + hnu + oxidized [2Fe-2S]-[ferredoxin] = oxidized [plastocyanin] + reduced [2Fe-2S]-[ferredoxin]. Apoprotein for the two 4Fe-4S centers FA and FB of photosystem I (PSI); essential for photochemical activity. FB is the terminal electron acceptor of PSI, donating electrons to ferredoxin. The C-terminus interacts with PsaA/B/D and helps assemble the protein into the PSI complex. Required for binding of PsaD and PsaE to PSI. PSI is a cytochrome c6-ferredoxin oxidoreductase, converting photonic excitation into a charge separation, which transfers an electron from the donor P700 chlorophyll pair to the spectroscopically characterized acceptors A0, A1, FX, FA and FB in turn. This Cyanophora paradoxa protein is Photosystem I iron-sulfur center.